A 273-amino-acid polypeptide reads, in one-letter code: Type II pantothenate kinase (273 aa).

Position 8 to 15 (Asp8 to Lys15) interacts with ATP. Catalysis depends on Glu76, which acts as the Proton acceptor. ATP-binding positions include Thr105, Gly127 to Met131, Phe143, and Ser230.

Belongs to the type II pantothenate kinase family. In terms of assembly, homodimer.

It localises to the cytoplasm. It carries out the reaction (R)-pantothenate + ATP = (R)-4'-phosphopantothenate + ADP + H(+). Its pathway is cofactor biosynthesis; coenzyme A biosynthesis; CoA from (R)-pantothenate: step 1/5. Its function is as follows. Catalyzes the phosphorylation of pantothenate (Pan), the first step in CoA biosynthesis. This chain is Type II pantothenate kinase, found in Bacillus cereus (strain G9842).